The primary structure comprises 417 residues: Aminoacyltransferase FemA (417 aa).

The protein belongs to the FemABX family.

The protein resides in the cytoplasm. It carries out the reaction beta-D-GlcNAc-(1-&gt;4)-Mur2Ac(oyl-L-Ala-D-isoglutaminyl-L-Lys-(N(6)-Gly)-D-Ala-D-Ala)-di-trans,octa-cis-undecaprenyl diphosphate + 2 glycyl-tRNA(Gly) = MurNAc-L-Ala-D-isoglutaminyl-L-Lys-(N(6)-tri-Gly)-D-Ala-D-Ala-diphospho-di-trans,octa-cis-undecaprenyl-GlcNAc + 2 tRNA(Gly) + 2 H(+). In terms of biological role, catalyzes the incorporation of amino acid(s) into the interchain peptide bridge of peptidoglycan, using aminoacyl-tRNA as amino acid donor. In Staphylococcus epidermidis (strain ATCC 35984 / DSM 28319 / BCRC 17069 / CCUG 31568 / BM 3577 / RP62A), this protein is Aminoacyltransferase FemA (femA).